Reading from the N-terminus, the 1188-residue chain is Zinc finger SWIM domain-containing protein 5 (1188 aa).

Positions 1 to 10 (MAEGGEREEL) are enriched in basic and acidic residues. Disordered stretches follow at residues 1–46 (MAEG…GAGG) and 123–171 (AGAA…TGTA). 2 stretches are compositionally biased toward low complexity: residues 126 to 136 (AAGAAGASPVE) and 146 to 155 (AAPAGSAPGA). Over residues 156-171 (AGAGSSPGLGAGTGTA) the composition is skewed to gly residues. An SWIM-type zinc finger spans residues 222 to 259 (YKVAISFDRCKITSVSCGCGNKDIFYCAHVVALSLYRI).

The protein is Zinc finger SWIM domain-containing protein 5 (Zswim5) of Mus musculus (Mouse).